Reading from the N-terminus, the 147-residue chain is Large ribosomal subunit protein uL15 (147 aa).

Residues 1–58 (MKLFELKPAPGAKKRPKRVGRGESSGHGKTSTRGHKGQWARSGGGVRPGFEGGQMPLT) are disordered. The span at 42 to 52 (SGGGVRPGFEG) shows a compositional bias: gly residues.

This sequence belongs to the universal ribosomal protein uL15 family. As to quaternary structure, part of the 50S ribosomal subunit.

In terms of biological role, binds to the 23S rRNA. This is Large ribosomal subunit protein uL15 from Caldicellulosiruptor saccharolyticus (strain ATCC 43494 / DSM 8903 / Tp8T 6331).